A 198-amino-acid polypeptide reads, in one-letter code: SCO2-like protein RF_0043 (198 aa).

Belongs to the SCO1/2 family.

This Rickettsia felis (strain ATCC VR-1525 / URRWXCal2) (Rickettsia azadi) protein is SCO2-like protein RF_0043.